The sequence spans 123 residues: Ribonuclease P protein component (123 aa).

It belongs to the RnpA family. Consists of a catalytic RNA component (M1 or rnpB) and a protein subunit.

It carries out the reaction Endonucleolytic cleavage of RNA, removing 5'-extranucleotides from tRNA precursor.. In terms of biological role, RNaseP catalyzes the removal of the 5'-leader sequence from pre-tRNA to produce the mature 5'-terminus. It can also cleave other RNA substrates such as 4.5S RNA. The protein component plays an auxiliary but essential role in vivo by binding to the 5'-leader sequence and broadening the substrate specificity of the ribozyme. In Streptococcus pneumoniae serotype 4 (strain ATCC BAA-334 / TIGR4), this protein is Ribonuclease P protein component.